Here is a 184-residue protein sequence, read N- to C-terminus: Ribosome-recycling factor (184 aa).

It belongs to the RRF family.

It is found in the cytoplasm. Responsible for the release of ribosomes from messenger RNA at the termination of protein biosynthesis. May increase the efficiency of translation by recycling ribosomes from one round of translation to another. The sequence is that of Ribosome-recycling factor from Mycoplasma pneumoniae (strain ATCC 29342 / M129 / Subtype 1) (Mycoplasmoides pneumoniae).